The primary structure comprises 576 residues: Carboxypeptidase S (576 aa).

Residues 1–19 are Cytoplasmic-facing; the sequence is MIALPVEKAPRKSLWQRHR. K8 is covalently cross-linked (Glycyl lysine isopeptide (Lys-Gly) (interchain with G-Cter in ubiquitin)). The chain crosses the membrane as a helical span at residues 20-40; that stretch reads AFISGIVALIIIGTFFLTSGL. The Lumenal segment spans residues 41-576; that stretch reads HPAPPHEAKR…EYIVNVNEYA (536 aa). Residues 44–65 form a disordered region; sequence PPHEAKRPHHGKGPMHSPKCEK. An N-linked (GlcNAc...) asparagine glycan is attached at N88. A Zn(2+)-binding site is contributed by H168. D170 is an active-site residue. The N-linked (GlcNAc...) asparagine glycan is linked to N176. D205 provides a ligand contact to Zn(2+). An N-linked (GlcNAc...) asparagine glycan is attached at N228. E239 acts as the Proton acceptor in catalysis. E240 and D268 together coordinate Zn(2+). Residues N381 and N525 are each glycosylated (N-linked (GlcNAc...) asparagine). H547 serves as a coordination point for Zn(2+).

It belongs to the peptidase M20A family. YscS is synthesized as one polypeptide chain precursor which after carbohydrate modification in the secretory pathway yields two active precursor molecules. The proteolytically unprocessed forms are associated with the membrane, whereas the mature forms of the enzyme are soluble. Zn(2+) is required as a cofactor. Post-translationally, glycosylated. Ubiquitinated. Ubiquitination mediates sorting into internal vesicles in late endosomes. TUL1 is required for ubiquitination.

The protein resides in the vacuole membrane. The catalysed reaction is Release of a C-terminal amino acid from a peptide in which glycine is the penultimate amino acid, e.g. Z-Gly-|-Leu.. Functionally, necessary for use of certain peptides as sole nitrogen source. May also cleave intracellularly generated peptides to recycle amino acids for protein synthesis. The sequence is that of Carboxypeptidase S (CPS1) from Saccharomyces cerevisiae (strain ATCC 204508 / S288c) (Baker's yeast).